Consider the following 285-residue polypeptide: 2-dehydro-3-deoxyphosphooctonate aldolase (285 aa).

It belongs to the KdsA family.

The protein localises to the cytoplasm. It carries out the reaction D-arabinose 5-phosphate + phosphoenolpyruvate + H2O = 3-deoxy-alpha-D-manno-2-octulosonate-8-phosphate + phosphate. The protein operates within carbohydrate biosynthesis; 3-deoxy-D-manno-octulosonate biosynthesis; 3-deoxy-D-manno-octulosonate from D-ribulose 5-phosphate: step 2/3. It participates in bacterial outer membrane biogenesis; lipopolysaccharide biosynthesis. This Acinetobacter baumannii (strain SDF) protein is 2-dehydro-3-deoxyphosphooctonate aldolase.